The sequence spans 989 residues: Phosphoenolpyruvate carboxylase (989 aa).

Residues His-175 and Lys-630 contribute to the active site.

It belongs to the PEPCase type 1 family. The cofactor is Mg(2+).

It catalyses the reaction oxaloacetate + phosphate = phosphoenolpyruvate + hydrogencarbonate. Functionally, forms oxaloacetate, a four-carbon dicarboxylic acid source for the tricarboxylic acid cycle. This is Phosphoenolpyruvate carboxylase from Prochlorococcus marinus (strain AS9601).